The following is a 155-amino-acid chain: SsrA-binding protein (155 aa).

Residues 136–155 form a disordered region; the sequence is REDLKRRQDQRDIQRAMKSY.

The protein belongs to the SmpB family.

It localises to the cytoplasm. In terms of biological role, required for rescue of stalled ribosomes mediated by trans-translation. Binds to transfer-messenger RNA (tmRNA), required for stable association of tmRNA with ribosomes. tmRNA and SmpB together mimic tRNA shape, replacing the anticodon stem-loop with SmpB. tmRNA is encoded by the ssrA gene; the 2 termini fold to resemble tRNA(Ala) and it encodes a 'tag peptide', a short internal open reading frame. During trans-translation Ala-aminoacylated tmRNA acts like a tRNA, entering the A-site of stalled ribosomes, displacing the stalled mRNA. The ribosome then switches to translate the ORF on the tmRNA; the nascent peptide is terminated with the 'tag peptide' encoded by the tmRNA and targeted for degradation. The ribosome is freed to recommence translation, which seems to be the essential function of trans-translation. This Nostoc punctiforme (strain ATCC 29133 / PCC 73102) protein is SsrA-binding protein.